The sequence spans 471 residues: Glutamate--tRNA ligase (471 aa).

A 'HIGH' region motif is present at residues 9–19; the sequence is PSPTGYLHVGG. C98, C100, C125, and H127 together coordinate Zn(2+). The 'KMSKS' region motif lies at 237 to 241; that stretch reads KLSKR. Residue K240 coordinates ATP.

Belongs to the class-I aminoacyl-tRNA synthetase family. Glutamate--tRNA ligase type 1 subfamily. Monomer. Requires Zn(2+) as cofactor.

It is found in the cytoplasm. It carries out the reaction tRNA(Glu) + L-glutamate + ATP = L-glutamyl-tRNA(Glu) + AMP + diphosphate. Functionally, catalyzes the attachment of glutamate to tRNA(Glu) in a two-step reaction: glutamate is first activated by ATP to form Glu-AMP and then transferred to the acceptor end of tRNA(Glu). This is Glutamate--tRNA ligase from Cronobacter sakazakii (strain ATCC BAA-894) (Enterobacter sakazakii).